The primary structure comprises 385 residues: S-type anion channel SLAH1 (385 aa).

The Cytoplasmic portion of the chain corresponds to 1 to 42 (MEIPRQEIHIEIDNSIPSSKEFKTGLADAKPVVLMSALRSLH). The helical transmembrane segment at 43 to 65 (AGYFRISLSLCSQALLWKIMIAP) threads the bilayer. The Extracellular segment spans residues 66–81 (ESPSMSHMHSKLPSMA). The helical transmembrane segment at 82–102 (FHLLWYLALVTQVSLCFLYAL) threads the bilayer. The Cytoplasmic portion of the chain corresponds to 103 to 114 (KCIFFFDKVKEE). Residues 115–135 (FLHYIGVNYLYAPSISWLLML) traverse the membrane as a helical segment. Residues 136 to 150 (QSAPMMEPNSVLYQT) are Extracellular-facing. The chain crosses the membrane as a helical span at residues 151–171 (LFWIFAVPVLTLDIKLYGQWF). Residues 172-176 (TTEKR) lie on the Cytoplasmic side of the membrane. Residues 177–197 (FLSMLANPASQVSVIANLVAA) traverse the membrane as a helical segment. Topologically, residues 198–207 (RGAAEMGWNE) are extracellular. The helical transmembrane segment at 208-228 (CALCMFSLGMVHYLVIFVTLY) threads the bilayer. Over 229–243 (QRLPGGNNFPAKLRP) the chain is Cytoplasmic. Residues 244-264 (IFFLFVAAPAMASLAWNSICG) traverse the membrane as a helical segment. A topological domain (extracellular) is located at residue Thr265. Residues 266-286 (FDAVAKMLFFLSLFIFMSLVC) form a helical membrane-spanning segment. The Cytoplasmic segment spans residues 287 to 299 (RPNLFKKSMKRFN). Residues 300–320 (VAWWAYSFPLTFLALDSVQYA) form a helical membrane-spanning segment. Residues 321 to 330 (QEVKDPVGSG) are Extracellular-facing. Residues 331–351 (LMLIFSSISVLIFLGMMVLTA) traverse the membrane as a helical segment. Residues 352–385 (ANSNRLLRHDPVLGSATDPKDKQKTLSLNATNQN) are Cytoplasmic-facing. Residues 366-385 (SATDPKDKQKTLSLNATNQN) form a disordered region. Polar residues predominate over residues 376–385 (TLSLNATNQN).

The protein belongs to the SLAC1 S-type anion channel family. In terms of assembly, homotrimer. In terms of tissue distribution, expressed in the vascular systems of root.

Its subcellular location is the cell membrane. In terms of biological role, slow, weak voltage-dependent S-type anion efflux channel involved in maintenance of anion homeostasis. This is S-type anion channel SLAH1 (SLAH1) from Arabidopsis thaliana (Mouse-ear cress).